Reading from the N-terminus, the 158-residue chain is Non-secretory ribonuclease (158 aa).

The N-terminal stretch at 1-27 (MVPKLFTSQICLLLLLGLLGVEGSLHA) is a signal peptide. Catalysis depends on His42, which acts as the Proton acceptor. Cystine bridges form between Cys50–Cys110, Cys64–Cys121, Cys82–Cys136, and Cys89–Cys98. Position 60 is a 3'-nitrotyrosine (Tyr60). Position 65–69 (65–69 (KNQNT)) interacts with substrate. Asn86, Asn92, and Asn111 each carry an N-linked (GlcNAc...) asparagine glycan. His153 serves as the catalytic Proton donor.

It belongs to the pancreatic ribonuclease family. Interacts with and forms a tight 1:1 complex with RNH1. Dimerization of two such complexes may occur.

Its subcellular location is the lysosome. It is found in the cytoplasmic granule. It carries out the reaction an [RNA] containing cytidine + H2O = an [RNA]-3'-cytidine-3'-phosphate + a 5'-hydroxy-ribonucleotide-3'-[RNA].. The catalysed reaction is an [RNA] containing uridine + H2O = an [RNA]-3'-uridine-3'-phosphate + a 5'-hydroxy-ribonucleotide-3'-[RNA].. This is a non-secretory ribonuclease. It is a pyrimidine specific nuclease with a slight preference for U. Cytotoxin and helminthotoxin. Possesses a wide variety of biological activities. The chain is Non-secretory ribonuclease (RNASE2) from Aotus trivirgatus (Three-striped night monkey).